Here is a 224-residue protein sequence, read N- to C-terminus: MSVFGKLFGAGGGKAGKGGPTPQEAIQRLRDTEEMLSKKQEFLEKKIEQELTAAKKHGTKNKRAALQALKRKKRYEKQLAQIDGTLSTIEFQREALENANTNTEVLKNMGYAAKAMKAAHDNMDIDKVDELMQDIADQQELAEEISTAISKPVGFGEEFDEDELMAELEELEQEELDKNLLEISGPETVPLPNVPSIALPSKPAKKKEEEDDDMKELENWAGSM.

The tract at residues methionine 1–glutamine 23 is disordered. Serine 2 carries the post-translational modification N-acetylserine. Lysine 6 is subject to N6-acetyllysine. The segment covering phenylalanine 8–glycine 19 has biased composition (gly residues). Positions glutamine 23–isoleucine 183 form a coiled coil. Lysine 114 bears the N6-acetyllysine mark. Phosphoserine occurs at positions 184 and 223. Residues glycine 185–methionine 224 form a disordered region.

This sequence belongs to the SNF7 family. Probable core component of the endosomal sorting required for transport complex III (ESCRT-III). ESCRT-III components are thought to multimerize to form a flat lattice on the perimeter membrane of the endosome. Several assembly forms of ESCRT-III may exist that interact and act sequentially. Interacts with CHMP6 and CHMP4C. Interacts with PDCD6IP; the interaction is direct. Interacts with VPS4A; the interaction is direct. Interacts with VPS4B; the interaction is direct. Interacts with CHMP7. Interacts with CFTR; the interaction requires misfolded CFTR. Interacts with PTPN23. Interacts with CC2D1B. Post-translationally, ISGylated. Isgylation weakens its interaction with VPS4A. In terms of tissue distribution, widely expressed. Expressed at higher level in heart and skeletal muscle. Also expressed in brain, colon, thymus, spleen, kidney, liver, small intestine, placenta, lung and peripheral blood lymphocytes.

Its subcellular location is the cytoplasm. It localises to the cytosol. The protein resides in the late endosome membrane. The protein localises to the midbody. It is found in the nucleus envelope. Its function is as follows. Probable core component of the endosomal sorting required for transport complex III (ESCRT-III) which is involved in multivesicular bodies (MVBs) formation and sorting of endosomal cargo proteins into MVBs. MVBs contain intraluminal vesicles (ILVs) that are generated by invagination and scission from the limiting membrane of the endosome and mostly are delivered to lysosomes enabling degradation of membrane proteins, such as stimulated growth factor receptors, lysosomal enzymes and lipids. The MVB pathway appears to require the sequential function of ESCRT-O, -I,-II and -III complexes. ESCRT-III proteins mostly dissociate from the invaginating membrane before the ILV is released. The ESCRT machinery also functions in topologically equivalent membrane fission events, such as the terminal stages of cytokinesis. Together with SPAST, the ESCRT-III complex promotes nuclear envelope sealing and mitotic spindle disassembly during late anaphase. Plays a role in the endosomal sorting pathway. ESCRT-III proteins are believed to mediate the necessary vesicle extrusion and/or membrane fission activities, possibly in conjunction with the AAA ATPase VPS4. When overexpressed, membrane-assembled circular arrays of CHMP4B filaments can promote or stabilize negative curvature and outward budding. CHMP4A/B/C are required for the exosomal release of SDCBP, CD63 and syndecan. Majority of the protein exists in a folded closed conformation. (Microbial infection) The ESCRT machinery also functions in topologically equivalent membrane fission events, such as the budding of enveloped viruses (HIV-1 and other lentiviruses). Via its interaction with PDCD6IP involved in HIV-1 p6- and p9-dependent virus release. The sequence is that of Charged multivesicular body protein 4b (CHMP4B) from Homo sapiens (Human).